Here is a 120-residue protein sequence, read N- to C-terminus: Spermidine export protein MdtJ (120 aa).

The next 4 membrane-spanning stretches (helical) occupy residues 1-21, 31-51, 54-74, and 81-101; these read MFYW…TLSM, TGFI…AFAV, IALG…ITLF, and ESLS…IVLI.

This sequence belongs to the drug/metabolite transporter (DMT) superfamily. Small multidrug resistance (SMR) (TC 2.A.7.1) family. MdtJ subfamily. In terms of assembly, forms a complex with MdtI.

It is found in the cell inner membrane. Functionally, catalyzes the excretion of spermidine. This chain is Spermidine export protein MdtJ, found in Klebsiella pneumoniae subsp. pneumoniae (strain ATCC 700721 / MGH 78578).